We begin with the raw amino-acid sequence, 64 residues long: Chassatide C7 (64 aa).

Positions 1–35 (VLVASLVMLEAQSSDTIQVPDWGKRLLMNHDSNRV) are cleaved as a propeptide — removed in mature form. 3 disulfides stabilise this stretch: C39–C55, C43–C57, and C48–C62.

As to expression, expressed in fruit, pedicel, root and stem but not in leaf (at protein level).

In terms of biological role, probably participates in a plant defense mechanism. Active against E.coli ATTC25922 but not against S.aureus ATCC 12600 or S.epidermidis ATCC 14990. Has cytotoxic and hemolytic activity. The chain is Chassatide C7 from Chassalia chartacea (Chassalia curviflora).